A 62-amino-acid chain; its full sequence is Large ribosomal subunit protein bL28 (62 aa).

Belongs to the bacterial ribosomal protein bL28 family.

The protein is Large ribosomal subunit protein bL28 of Helicobacter pylori (strain Shi470).